Here is a 240-residue protein sequence, read N- to C-terminus: UDP-2,3-diacylglucosamine hydrolase (240 aa).

Positions 9, 11, 43, 81, and 116 each coordinate Mn(2+). Substrate is bound at residue 81 to 82 (NR). 5 residues coordinate substrate: Asp124, Ser162, Lys166, Lys169, and His197. Positions 197 and 199 each coordinate Mn(2+).

It belongs to the LpxH family. Requires Mn(2+) as cofactor.

It localises to the cell inner membrane. The enzyme catalyses UDP-2-N,3-O-bis[(3R)-3-hydroxytetradecanoyl]-alpha-D-glucosamine + H2O = 2-N,3-O-bis[(3R)-3-hydroxytetradecanoyl]-alpha-D-glucosaminyl 1-phosphate + UMP + 2 H(+). The protein operates within glycolipid biosynthesis; lipid IV(A) biosynthesis; lipid IV(A) from (3R)-3-hydroxytetradecanoyl-[acyl-carrier-protein] and UDP-N-acetyl-alpha-D-glucosamine: step 4/6. Its function is as follows. Hydrolyzes the pyrophosphate bond of UDP-2,3-diacylglucosamine to yield 2,3-diacylglucosamine 1-phosphate (lipid X) and UMP by catalyzing the attack of water at the alpha-P atom. Involved in the biosynthesis of lipid A, a phosphorylated glycolipid that anchors the lipopolysaccharide to the outer membrane of the cell. This Neisseria meningitidis serogroup A / serotype 4A (strain DSM 15465 / Z2491) protein is UDP-2,3-diacylglucosamine hydrolase.